The following is an 814-amino-acid chain: Glycosyltransferase GlyD (814 aa).

The tract at residues 1–264 is GT8 domain; the sequence is MNKTIVLAGD…SQILQHHMGE (264 aa). Residues 8-13 and 102-103 each bind UDP; these read AGDRNY and DS. Residues aspartate 102, aspartate 104, and histidine 226 each contribute to the Mn(2+) site. Residue 226-232 coordinates UDP; that stretch reads HFTTYRK. The tract at residues 542–814 is GT-D domain; the sequence is EKPLDIIQVK…NSQIVARILN (273 aa).

This sequence in the N-terminal section; belongs to the glycosyltransferase 8 family. In the C-terminal section; belongs to the GT-D family.

It functions in the pathway protein modification; protein glycosylation. Its function is as follows. Involved in the polymorphic O-glycosylation of the serine-rich repeat protein PsrP. Catalyzes the third step in glycosylation PsrP in this bacteria. Transfers glucose from UDP-glucose to the terminal glucose moiety of already-glycosylated PsrP (using truncated substrates with PsrP SSR1-GlcNAc-Glc); the C-terminal GT-D domain is sufficient for this reaction in vitro. Also transfers galactose from UDP-galactose to the terminal glucose moiety of already-glycosylated PsrP; the C-terminal GT-D domain is also sufficient for this reaction in vitro. Activity is much higher with UDP-glucose, and the enzyme has a very marked preference for PsrP substrate that has already been modified by GlcNAc and glucose. In vitro has hydrolytic activity against UDP-galactose and to a lesser extent against UDP-glucose. Functionally, also catalyzes the fourth step in glycosylation of PsrP in this bacteria. Can transfer the sugar from both UDP-glucose and UDP-galactose to the terminal sugar moiety of PsrP-GlcNAc-Glc-Glc and PsrP-GlcNAc-Glc-Gal; the C-terminal GT-D domain is also sufficient for this reaction in vitro (using truncated substrates with glycosylated PsrP SSR1). The N-terminal GT-D domain can transfer galactose from UDP-galactose to PsrP-GlcNAc-Glc-Gal or PsrP-GlcNAc-Glc-Glc in the fourth step. The sequence is that of Glycosyltransferase GlyD from Streptococcus pneumoniae serotype 4 (strain ATCC BAA-334 / TIGR4).